The chain runs to 159 residues: SsrA-binding protein (159 aa).

This sequence belongs to the SmpB family.

Its subcellular location is the cytoplasm. Functionally, required for rescue of stalled ribosomes mediated by trans-translation. Binds to transfer-messenger RNA (tmRNA), required for stable association of tmRNA with ribosomes. tmRNA and SmpB together mimic tRNA shape, replacing the anticodon stem-loop with SmpB. tmRNA is encoded by the ssrA gene; the 2 termini fold to resemble tRNA(Ala) and it encodes a 'tag peptide', a short internal open reading frame. During trans-translation Ala-aminoacylated tmRNA acts like a tRNA, entering the A-site of stalled ribosomes, displacing the stalled mRNA. The ribosome then switches to translate the ORF on the tmRNA; the nascent peptide is terminated with the 'tag peptide' encoded by the tmRNA and targeted for degradation. The ribosome is freed to recommence translation, which seems to be the essential function of trans-translation. This chain is SsrA-binding protein, found in Coxiella burnetii (strain RSA 493 / Nine Mile phase I).